Reading from the N-terminus, the 162-residue chain is Dihydrofolate reductase (162 aa).

Residues 3–161 enclose the DHFR domain; the sequence is KITLIAACAE…TRYAFVHYLR (159 aa). Residue 7 to 9 coordinates substrate; it reads IAA. NADP(+) is bound by residues 8–9 and 16–21; these read AA and IGAGNA. A substrate-binding site is contributed by aspartate 29. NADP(+) is bound at residue 45–48; that stretch reads GRKT. Residue arginine 60 coordinates substrate. NADP(+) is bound by residues 65 to 68 and 98 to 103; these read ISRQ and MGGAQI. Threonine 117 is a binding site for substrate.

It belongs to the dihydrofolate reductase family.

The enzyme catalyses (6S)-5,6,7,8-tetrahydrofolate + NADP(+) = 7,8-dihydrofolate + NADPH + H(+). It functions in the pathway cofactor biosynthesis; tetrahydrofolate biosynthesis; 5,6,7,8-tetrahydrofolate from 7,8-dihydrofolate: step 1/1. In terms of biological role, key enzyme in folate metabolism. Catalyzes an essential reaction for de novo glycine and purine synthesis, and for DNA precursor synthesis. The sequence is that of Dihydrofolate reductase (folA) from Neisseria meningitidis serogroup B (strain ATCC BAA-335 / MC58).